A 410-amino-acid polypeptide reads, in one-letter code: Peptidase T (410 aa).

A Zn(2+)-binding site is contributed by histidine 79. Residue aspartate 81 is part of the active site. Aspartate 142 contributes to the Zn(2+) binding site. Catalysis depends on glutamate 176, which acts as the Proton acceptor. Zn(2+)-binding residues include glutamate 177, aspartate 199, and histidine 381.

Belongs to the peptidase M20B family. It depends on Zn(2+) as a cofactor.

The protein localises to the cytoplasm. The enzyme catalyses Release of the N-terminal residue from a tripeptide.. In terms of biological role, cleaves the N-terminal amino acid of tripeptides. The chain is Peptidase T from Listeria monocytogenes serotype 4b (strain F2365).